Here is a 279-residue protein sequence, read N- to C-terminus: Pantothenate synthetase (279 aa).

26-33 serves as a coordination point for ATP; that stretch reads MGNLHEGH. Catalysis depends on His-33, which acts as the Proton donor. Gln-57 contacts (R)-pantoate. Gln-57 is a binding site for beta-alanine. 144-147 provides a ligand contact to ATP; sequence GKKD. Gln-150 is a (R)-pantoate binding site. ATP is bound by residues Val-173 and 181–184; that span reads LSSR.

It belongs to the pantothenate synthetase family. Homodimer.

The protein resides in the cytoplasm. It catalyses the reaction (R)-pantoate + beta-alanine + ATP = (R)-pantothenate + AMP + diphosphate + H(+). The protein operates within cofactor biosynthesis; (R)-pantothenate biosynthesis; (R)-pantothenate from (R)-pantoate and beta-alanine: step 1/1. Its function is as follows. Catalyzes the condensation of pantoate with beta-alanine in an ATP-dependent reaction via a pantoyl-adenylate intermediate. This is Pantothenate synthetase from Burkholderia ambifaria (strain MC40-6).